A 375-amino-acid polypeptide reads, in one-letter code: Anhydro-N-acetylmuramic acid kinase (375 aa).

Position 12–19 (12–19) interacts with ATP; the sequence is GTSLDGVD.

Belongs to the anhydro-N-acetylmuramic acid kinase family.

The enzyme catalyses 1,6-anhydro-N-acetyl-beta-muramate + ATP + H2O = N-acetyl-D-muramate 6-phosphate + ADP + H(+). It participates in amino-sugar metabolism; 1,6-anhydro-N-acetylmuramate degradation. It functions in the pathway cell wall biogenesis; peptidoglycan recycling. Functionally, catalyzes the specific phosphorylation of 1,6-anhydro-N-acetylmuramic acid (anhMurNAc) with the simultaneous cleavage of the 1,6-anhydro ring, generating MurNAc-6-P. Is required for the utilization of anhMurNAc either imported from the medium or derived from its own cell wall murein, and thus plays a role in cell wall recycling. The sequence is that of Anhydro-N-acetylmuramic acid kinase from Variovorax paradoxus (strain S110).